The following is a 401-amino-acid chain: Phosphoglycerate kinase (401 aa).

Residues 21-23 (DLN), Arg-36, 59-62 (HQGR), Arg-116, and Arg-156 each bind substrate. Residues Glu-331 and 357 to 360 (GGDT) contribute to the ATP site.

This sequence belongs to the phosphoglycerate kinase family.

Its subcellular location is the cytoplasm. It catalyses the reaction (2R)-3-phosphoglycerate + ATP = (2R)-3-phospho-glyceroyl phosphate + ADP. It participates in carbohydrate degradation; glycolysis; pyruvate from D-glyceraldehyde 3-phosphate: step 2/5. The protein is Phosphoglycerate kinase (pgk) of Haloarcula vallismortis (Halobacterium vallismortis).